Reading from the N-terminus, the 384-residue chain is Zinc finger protein GLIS2 homolog (384 aa).

Residues 128-153 (FVCNWTDCDRVFDTLDALAQHVTQRH) form a C2H2-type 1 zinc finger. The segment at 163-190 (YYCRWRGCQRSERGFNARYKMLVHTRTH) adopts a C2H2-type 2; degenerate zinc-finger fold. 3 consecutive C2H2-type zinc fingers follow at residues 196–218 (HRCH…IRSH), 224–248 (YKCS…TRTH), and 254–280 (YMCK…TFKH). A disordered region spans residues 321–343 (SSSSARYYDDSNNEPSDYSLKPK).

The protein belongs to the GLI C2H2-type zinc-finger protein family.

Its subcellular location is the nucleus. Its function is as follows. Transcription factor which represses a set of lipase genes involved in fat catabolism. The chain is Zinc finger protein GLIS2 homolog (sug) from Drosophila melanogaster (Fruit fly).